Here is a 350-residue protein sequence, read N- to C-terminus: Fe(2+) transport protein 2 (350 aa).

The signal sequence occupies residues methionine 1–alanine 21. At isoleucine 22–lysine 47 the chain is on the extracellular side. Residues isoleucine 48–serine 68 form a helical membrane-spanning segment. The Cytoplasmic portion of the chain corresponds to arginine 69 to glycine 80. The helical transmembrane segment at phenylalanine 81–leucine 101 threads the bilayer. Over proline 102–lysine 120 the chain is Extracellular. Residues phenylalanine 121–isoleucine 141 traverse the membrane as a helical segment. Over threonine 142 to glutamine 195 the chain is Cytoplasmic. Residues valine 196–leucine 216 traverse the membrane as a helical segment. Topologically, residues glycine 217 to glycine 227 are extracellular. The helical transmembrane segment at leucine 228–leucine 248 threads the bilayer. The Cytoplasmic portion of the chain corresponds to glutamine 249–lysine 257. A helical membrane pass occupies residues phenylalanine 258–leucine 278. Topologically, residues serine 279–alanine 289 are extracellular. A helical membrane pass occupies residues leucine 290 to valine 310. At aspartate 311–glutamine 329 the chain is on the cytoplasmic side. Residues isoleucine 330–alanine 350 traverse the membrane as a helical segment.

This sequence belongs to the ZIP transporter (TC 2.A.5) family. As to expression, expressed in the external cell layers of the root subapical zone.

The protein resides in the cell membrane. Functionally, high-affinity iron transporter that mediates under iron-deficiency the iron uptake from the rhizosphere across the plasma membrane in the root epidermal layer. Could also be capable of transporting zinc ions. This chain is Fe(2+) transport protein 2 (IRT2), found in Arabidopsis thaliana (Mouse-ear cress).